Here is a 417-residue protein sequence, read N- to C-terminus: MSLSKKLTLDKLDVKGKRIIMRVDFNVPMKKNQITNNQRIKASIPSIKYCLDNGARSVVLMSHLGRPDGVPMPDKYSLEPVAAELKSLLGKDVLFLKDCVGSEVEKACANPATGSVILLENLRFHVEEEGKGQDPSGNKLKAEAGKIEAFRASLSKLGDVYVNDAFGTAHRAHSSMVGINLPQKASGFLMKKELEYFAKALENPERPFLAILGGAKVADKIQLIKNMLDKVNEMIIGGGMAYTFLKVLNNMEIGASLFDEEGAKIVKDIMAKANKNGVRITFPVDFVTADKFEENAKVGQATVASGIPAGWMGLDCGPETNKKYAQVMAQAKLIVWNGPVGVFEWDAFAKGTKALMDEIVKATSRGCITIIGGGDTATCCAKWNTEDKVSHVSTGGGASLELLEGKILPGVDALSNL.

The residue at position 2 (serine 2) is an N-acetylserine. Residues serine 2 and serine 4 each carry the phosphoserine modification. Lysine 11 is subject to N6-acetyllysine. (2R)-3-phosphoglycerate-binding residues include valine 23, aspartate 24, phenylalanine 25, asparagine 26, glutamine 38, and arginine 39. At lysine 48 the chain carries N6-acetyllysine. 4 residues coordinate (2R)-3-phosphoglycerate: serine 62, histidine 63, glycine 65, and arginine 66. Residues lysine 75, lysine 86, and lysine 97 each carry the N6-acetyllysine modification. Positions 122 and 123 each coordinate (2R)-3-phosphoglycerate. N6-acetyllysine is present on residues lysine 131 and lysine 146. (2R)-3-phosphoglycerate-binding residues include histidine 170 and arginine 171. Tyrosine 196 bears the Phosphotyrosine mark. Lysine 199 bears the N6-acetyllysine mark. Residue glycine 214 participates in ADP binding. Position 214 (glycine 214) interacts with CDP. AMP contacts are provided by alanine 215 and lysine 216. Alanine 215 contacts ATP. Residue alanine 215 participates in Mg(2+) binding. Mg(2+) contacts are provided by alanine 218 and aspartate 219. Residue aspartate 219 participates in CDP binding. AMP is bound at residue lysine 220. Lysine 220 contributes to the ATP binding site. Glycine 238 is an ADP binding site. Glycine 238 is a binding site for CDP. Glycine 239 contributes to the AMP binding site. Glycine 239 contributes to the ATP binding site. 2 positions are modified to N6-acetyllysine: lysine 267 and lysine 291. Glycine 313 provides a ligand contact to AMP. Residue glycine 313 participates in ATP binding. Residues glycine 338, valine 340, and phenylalanine 343 each contribute to the CDP site. An ADP-binding site is contributed by phenylalanine 343. Glutamate 344 lines the AMP pocket. ATP is bound by residues glutamate 344, aspartate 375, and threonine 376. Residue aspartate 375 participates in Mg(2+) binding.

The protein belongs to the phosphoglycerate kinase family. As to quaternary structure, monomer. Mg(2+) serves as cofactor.

It is found in the cytoplasm. It carries out the reaction (2R)-3-phosphoglycerate + ATP = (2R)-3-phospho-glyceroyl phosphate + ADP. It functions in the pathway carbohydrate degradation; glycolysis; pyruvate from D-glyceraldehyde 3-phosphate: step 2/5. Essential for sperm motility and male fertility but is not required for the completion of spermatogenesis. The sequence is that of Phosphoglycerate kinase 2 (PGK2) from Equus caballus (Horse).